The primary structure comprises 698 residues: Sulfhydryl oxidase 2 (698 aa).

The N-terminal stretch at 1 to 21 is a signal peptide; that stretch reads MAAAGAAVARSPGIGAGPALR. In terms of domain architecture, Thioredoxin spans 34 to 178; that stretch reads PRLLVLLAAA…RQTMIDFLQN (145 aa). N77 carries an N-linked (GlcNAc...) asparagine glycan. Residues C91 and C94 each act as nucleophile in the active site. 2 cysteine pairs are disulfide-bonded: C91-C94 and C122-C131. N-linked (GlcNAc...) asparagine glycosylation is found at N178, N218, and N266. A disulfide bridge links C418 with C430. The ERV/ALR sulfhydryl oxidase domain occupies 421-530; sequence SRSELRGYPC…EDPRFPKLQW (110 aa). Residues R426, W433, H437, E478, H482, 505-512, K527, and W530 each bind FAD; that span reads WKKHNMVN. Residues C476 and C479 are joined by a disulfide bond. Cysteines 536 and 539 form a disulfide. A disordered region spans residues 570 to 624; sequence TYSADQGDSSEGGTLARGEEEEKRLTPPEVSHGDRDTQSVRPPGALGPRPALPES. Residues 572–581 are compositionally biased toward polar residues; that stretch reads SADQGDSSEG. Position 579 is a phosphoserine (S579). The span at 586 to 607 shows a compositional bias: basic and acidic residues; sequence RGEEEEKRLTPPEVSHGDRDTQ. Residues 610 to 622 are compositionally biased toward low complexity; that stretch reads RPPGALGPRPALP. Residues 662-682 traverse the membrane as a helical segment; the sequence is SLCVVLYVASSLFLMVMYFFF.

The protein belongs to the quiescin-sulfhydryl oxidase (QSOX) family. Requires FAD as cofactor. As to expression, expressed in pancreas, brain, placenta, kidney, heart and fetal tissues. Weakly expressed in lung, liver and skeletal muscles.

The protein resides in the membrane. The protein localises to the secreted. It is found in the cell membrane. It localises to the nucleus membrane. It catalyses the reaction 2 R'C(R)SH + O2 = R'C(R)S-S(R)CR' + H2O2. Functionally, catalyzes the oxidation of sulfhydryl groups in peptide and protein thiols to disulfides with the reduction of oxygen to hydrogen peroxide. May contribute to disulfide bond formation in a variety of secreted proteins. Also seems to play a role in regulating the sensitization of neuroblastoma cells for interferon-gamma-induced apoptosis. This chain is Sulfhydryl oxidase 2 (QSOX2), found in Homo sapiens (Human).